Here is a 159-residue protein sequence, read N- to C-terminus: 6,7-dimethyl-8-ribityllumazine synthase (159 aa).

5-amino-6-(D-ribitylamino)uracil-binding positions include W26, 57-59 (ALE), and 79-81 (CVV). (2S)-2-hydroxy-3-oxobutyl phosphate is bound at residue 84–85 (GT). H87 serves as the catalytic Proton donor. N112 serves as a coordination point for 5-amino-6-(D-ribitylamino)uracil. R126 contacts (2S)-2-hydroxy-3-oxobutyl phosphate.

Belongs to the DMRL synthase family.

The catalysed reaction is (2S)-2-hydroxy-3-oxobutyl phosphate + 5-amino-6-(D-ribitylamino)uracil = 6,7-dimethyl-8-(1-D-ribityl)lumazine + phosphate + 2 H2O + H(+). It participates in cofactor biosynthesis; riboflavin biosynthesis; riboflavin from 2-hydroxy-3-oxobutyl phosphate and 5-amino-6-(D-ribitylamino)uracil: step 1/2. Functionally, catalyzes the formation of 6,7-dimethyl-8-ribityllumazine by condensation of 5-amino-6-(D-ribitylamino)uracil with 3,4-dihydroxy-2-butanone 4-phosphate. This is the penultimate step in the biosynthesis of riboflavin. This is 6,7-dimethyl-8-ribityllumazine synthase from Corynebacterium glutamicum (strain ATCC 13032 / DSM 20300 / JCM 1318 / BCRC 11384 / CCUG 27702 / LMG 3730 / NBRC 12168 / NCIMB 10025 / NRRL B-2784 / 534).